The primary structure comprises 69 residues: Sperm protamine P1 (69 aa).

Composition is skewed to basic residues over residues 1-30 (MARF…RRGG) and 37-69 (KITR…RRRN). Residues 1–69 (MARFRPSRSR…SRRRRRRRRN (69 aa)) form a disordered region.

It belongs to the protamine P1 family. As to expression, testis.

The protein localises to the nucleus. It localises to the chromosome. Its function is as follows. Protamines substitute for histones in the chromatin of sperm during the haploid phase of spermatogenesis. They compact sperm DNA into a highly condensed, stable and inactive complex. In Tachyglossus aculeatus aculeatus (Southeast Australian short-beaked echidna), this protein is Sperm protamine P1 (PRM1).